Consider the following 409-residue polypeptide: Testis-expressed protein 13A (409 aa).

A required for repression of transcription region spans residues 92-408; sequence WLHGFAKLHK…CGKGIWLQKP (317 aa). The interval 347-374 is disordered; the sequence is GGPHRIDHQEHPRDRRYSEPHQQRPPVY. Residues 348–368 are compositionally biased toward basic and acidic residues; that stretch reads GPHRIDHQEHPRDRRYSEPHQ. The segment at 376–400 adopts a RanBP2-type zinc-finger fold; that stretch reads RPGDWDCPWCNAVNFSRRDTCFDCG. Residues cysteine 382, cysteine 385, cysteine 396, and cysteine 399 each coordinate Zn(2+).

The protein belongs to the TEX13 family. In terms of assembly, interacts with CNOT1; the interaction may inhibit CNOT1 binding to mRNA and subsequently CNOT1-mediated mRNA degradation. Testis specific.

In terms of biological role, binds to ssRNA containing the consensus sequence 5'-AGGUAA-3'. Plays a role in transcriptional repression. Required for rapid sperm motility and timely degradation of mRNA via its interaction with CNOT1. The protein is Testis-expressed protein 13A of Homo sapiens (Human).